Reading from the N-terminus, the 183-residue chain is Capsid protein (183 aa).

A disordered region spans residues 136-183; the sequence is NAPILSTLPETTVVRRRGRSPRRRTPSPRRRRSQSPRRRRTQSRESQC. A compositionally biased stretch (basic residues) spans 149–176; sequence VRRRGRSPRRRTPSPRRRRSQSPRRRRT. Residues serine 155, serine 162, and serine 170 each carry the phosphoserine; by host modification. Residues 155–161 form a 1; half-length repeat; that stretch reads SPRRRTP. The segment at 155 to 177 is 3 X 8 AA repeats of S-P-R-R-R-[PR]-[ST]-Q; it reads SPRRRTPSPRRRRSQSPRRRRTQ. Positions 158–175 match the Bipartite nuclear localization signal motif; it reads RRTPSPRRRRSQSPRRRR. Tandem repeats lie at residues 162–169 and 170–177. The segment at 177 to 183 is RNA binding; that stretch reads QSRESQC.

Belongs to the orthohepadnavirus core antigen family. Homodimerizes, then multimerizes. Interacts with cytosol exposed regions of viral L glycoprotein present in the reticulum-to-Golgi compartment. Interacts with human FLNB. Phosphorylated form interacts with host importin alpha; this interaction depends on the exposure of the NLS, which itself depends upon genome maturation and/or phosphorylation of the capsid protein. Interacts with host NUP153. In terms of processing, phosphorylated by host SRPK1, SRPK2, and maybe protein kinase C or GAPDH. Phosphorylation is critical for pregenomic RNA packaging. Protein kinase C phosphorylation is stimulated by HBx protein and may play a role in transport of the viral genome to the nucleus at the late step during the viral replication cycle.

It is found in the virion. Its subcellular location is the host cytoplasm. Self assembles to form an icosahedral capsid. Most capsids appear to be large particles with an icosahedral symmetry of T=4 and consist of 240 copies of capsid protein, though a fraction forms smaller T=3 particles consisting of 180 capsid proteins. Entering capsids are transported along microtubules to the nucleus. Phosphorylation of the capsid is thought to induce exposure of nuclear localization signal in the C-terminal portion of the capsid protein that allows binding to the nuclear pore complex via the importin (karyopherin-) alpha and beta. Capsids are imported in intact form through the nuclear pore into the nuclear basket, where it probably binds NUP153. Only capsids that contain the mature viral genome can release the viral DNA and capsid protein into the nucleoplasm. Immature capsids get stuck in the basket. Capsids encapsulate the pre-genomic RNA and the P protein. Pre-genomic RNA is reverse-transcribed into DNA while the capsid is still in the cytoplasm. The capsid can then either be directed to the nucleus, providing more genomes for transcription, or bud through the endoplasmic reticulum to provide new virions. This is Capsid protein from Hepatitis B virus genotype D (isolate France/alpha1/1989) (HBV-D).